The primary structure comprises 437 residues: Trigger factor (437 aa).

The 86-residue stretch at 161-246 (DDQVNIDFVG…VNSVSAPVLP (86 aa)) folds into the PPIase FKBP-type domain.

The protein belongs to the FKBP-type PPIase family. Tig subfamily.

It localises to the cytoplasm. It carries out the reaction [protein]-peptidylproline (omega=180) = [protein]-peptidylproline (omega=0). Functionally, involved in protein export. Acts as a chaperone by maintaining the newly synthesized protein in an open conformation. Functions as a peptidyl-prolyl cis-trans isomerase. The polypeptide is Trigger factor (Pseudomonas putida (strain ATCC 700007 / DSM 6899 / JCM 31910 / BCRC 17059 / LMG 24140 / F1)).